We begin with the raw amino-acid sequence, 936 residues long: Pre-rRNA-processing protein FHL1 (936 aa).

2 disordered regions span residues methionine 1–leucine 90 and aspartate 139–threonine 169. Polar residues predominate over residues glutamate 9–serine 29. Serine 44 carries the phosphoserine modification. A compositionally biased stretch (basic and acidic residues) spans aspartate 139–isoleucine 150. Position 228 is a phosphoserine (serine 228). Phosphothreonine is present on residues threonine 230 and threonine 247. A compositionally biased stretch (polar residues) spans proline 243 to glutamate 257. Positions proline 243–serine 270 are disordered. Phosphoserine is present on serine 264. The FHA domain maps to alanine 300–valine 357. The span at glutamate 384–glutamate 395 shows a compositional bias: basic and acidic residues. The interval glutamate 384 to proline 442 is disordered. Positions serine 416–glutamine 430 are enriched in basic residues. The segment at residues threonine 460 to isoleucine 552 is a DNA-binding region (fork-head). The disordered stretch occupies residues alanine 718–leucine 936. Composition is skewed to polar residues over residues serine 742 to asparagine 753 and aspartate 765 to glutamine 777. 2 stretches are compositionally biased toward low complexity: residues alanine 779–serine 795 and glutamate 815–glutamate 853. A compositionally biased stretch (acidic residues) spans serine 854–glutamate 863. A compositionally biased stretch (basic and acidic residues) spans valine 864–aspartate 911.

The protein localises to the nucleus. Its function is as follows. Acts as a transcriptional regulator that recruits coactivator IFH1 to the promoters of ribosomal protein genes. Recruited to ribosomal gene promoters by RAP1. This Saccharomyces cerevisiae (strain ATCC 204508 / S288c) (Baker's yeast) protein is Pre-rRNA-processing protein FHL1 (FHL1).